Reading from the N-terminus, the 305-residue chain is Mas-related G-protein coupled receptor member A8 (305 aa).

Topologically, residues 1–17 are extracellular; the sequence is MDKTILGSIDIETLIRH. A helical transmembrane segment spans residues 18 to 38; the sequence is LMIIIFGLVGLTGNAIVFWLL. The Cytoplasmic segment spans residues 39-46; sequence GFHLHRNA. A helical membrane pass occupies residues 47 to 67; it reads FLVYILNLALADFFYLLCHII. Residues 68–85 lie on the Extracellular side of the membrane; that stretch reads NSIMFLLKVPSPNIILDH. Residues 86–106 traverse the membrane as a helical segment; the sequence is CFYTIMIVLYITGLSMLSAIS. Topologically, residues 107–129 are cytoplasmic; it reads TERCLSVLCPIWYRCHRPEHTST. A helical transmembrane segment spans residues 130–150; that stretch reads AMCAVIWVMSLLISILNGYFC. N-linked (GlcNAc...) asparagine glycans are attached at residues asparagine 151 and asparagine 159. The Extracellular portion of the chain corresponds to 151–172; sequence NFSSPKYVNNSVCQASDIFIRT. A helical membrane pass occupies residues 173–193; that stretch reads YPIFLFVLLCLSTLALLARLF. At 194–207 the chain is on the cytoplasmic side; it reads SGAGKRKFTRLFVT. A helical membrane pass occupies residues 208–228; the sequence is IMLAILVFLLCGLPLGFFWFL. The Extracellular segment spans residues 229–243; the sequence is SPWIEDRFIVLDYRL. A helical transmembrane segment spans residues 244-264; sequence FFASVVLTVVNSCANPIIYFF. Topologically, residues 265–305 are cytoplasmic; that stretch reads VGSFRHRLKQQTLKMFLQRALQDTPETPENMVEMSRSKAEP.

This sequence belongs to the G-protein coupled receptor 1 family. Mas subfamily. As to expression, expressed in a subset of sensory neurons that includes nociceptors. Expressed in the subclass of non-peptidergic sensory neurons that are IB4(+) and VR1(-).

The protein resides in the cell membrane. Its function is as follows. Orphan receptor. May be a receptor for RFamide-family neuropeptides such as NPFF and NPAF, which are analgesic in vivo. May regulate nociceptor function and/or development, including the sensation or modulation of pain. The polypeptide is Mas-related G-protein coupled receptor member A8 (Mrgpra8) (Mus musculus (Mouse)).